The chain runs to 584 residues: Outer membrane transporter CdiB-2 (584 aa).

A signal peptide spans 1 to 20; that stretch reads MATRFAILPVTALITLTAQA. Over residues 24–44 the composition is skewed to low complexity; that stretch reads PTPNDQAAAARANAEQNQQAQ. The tract at residues 24–72 is disordered; sequence PTPNDQAAAARANAEQNQQAQQRRDAQQRDATVQAPGVRSDVPRPEAYP. Positions 98–171 constitute a POTRA domain; the sequence is SKAQGASALP…GALKLALIPG (74 aa).

This sequence belongs to the TPS (TC 1.B.20) family.

The protein localises to the cell outer membrane. Functionally, potential outer membrane protein component of a toxin-immunity protein module, which functions as a cellular contact-dependent growth inhibition (CDI) system. CDI modules allow bacteria to communicate with and inhibit the growth of closely related neighboring bacteria in a contact-dependent fashion. This protein may be required for secretion and assembly of the CdiA toxin protein. In terms of biological role, expression of this cdiAIB locus in B.thailandensis confers protection against other bacteria carrying the locus; growth inhibition requires cellular contact. Its function is as follows. Probable member of a two partner secretion pathway (TPS) in which it mediates the secretion of CdiA2. The polypeptide is Outer membrane transporter CdiB-2 (cdiB2) (Burkholderia pseudomallei (strain 1026b)).